We begin with the raw amino-acid sequence, 294 residues long: DNA replication complex GINS protein SLD5 (294 aa).

It belongs to the GINS4/SLD5 family. As to quaternary structure, component of the GINS complex which is a heterotetramer composed of SLD5, PSF1, PSF2 and PSF3. Interacts with PSF2.

The protein localises to the nucleus. Functionally, required for DNA replication. Functions as part of the GINS complex which plays an essential role in the initiation of DNA replication by binding to DNA replication origins and facilitating the assembly of the DNA replication machinery. This chain is DNA replication complex GINS protein SLD5, found in Saccharomyces cerevisiae (strain ATCC 204508 / S288c) (Baker's yeast).